We begin with the raw amino-acid sequence, 1180 residues long: uncharacterized protein (1180 aa).

7 disordered regions span residues 229-280, 431-465, 484-575, 730-758, 810-986, 1045-1109, and 1125-1152; these read RQQG…DTSI, KQPPKEKAHRRGAPHPESEPESSEESTPVWRPPLK, SRDT…PNMR, GRPLRETHHNDQDPEPRSMTLDSPRASRT, GKAE…ASWD, RLQE…ELEM, and ERLEYQRRKQEAEEKARLEAEERRQKEE. Acidic residues predominate over residues 269 to 279; that stretch reads QEDETQAEDTS. Residues 431-443 show a composition bias toward basic residues; the sequence is KQPPKEKAHRRGA. Over residues 486–497 the composition is skewed to polar residues; the sequence is DTLSPQGSSSLP. Basic residues predominate over residues 509–518; sequence SKARHTRVHS. 3 stretches are compositionally biased toward basic and acidic residues: residues 730–745, 826–837, and 846–856; these read GRPLRETHHNDQDPEP, SHERDLINEAKR, and TKGPKSEREGK. Residues 872-889 are compositionally biased toward basic residues; it reads KAKKKLEKKTRPQRKRTQ. The segment covering 937-959 has biased composition (polar residues); it reads QESQVSLDGRSSPSQIATVTGNM. 3 stretches are compositionally biased toward basic and acidic residues: residues 960–986, 1045–1106, and 1127–1152; these read ESKEERRCEDPSKALLTKREQEKASWD, RLQE…RQEE, and LEYQRRKQEAEEKARLEAEERRQKEE. The stretch at 988-1171 forms a coiled coil; sequence LRAERAEMRW…ATKQAQEQAR (184 aa).

This is an uncharacterized protein from Homo sapiens (Human).